Here is a 383-residue protein sequence, read N- to C-terminus: Oxysterol-binding protein-related protein 4B (383 aa).

This sequence belongs to the OSBP family. Expressed in stems and flowers.

In terms of biological role, may be involved in the transport of sterols. In Arabidopsis thaliana (Mouse-ear cress), this protein is Oxysterol-binding protein-related protein 4B (ORP4B).